A 482-amino-acid polypeptide reads, in one-letter code: G-protein coupled receptor 37-like 1 (482 aa).

Residues 1 to 25 form the signal peptide; the sequence is MRWLWPLGVSLAVALAAGPERAPRG. Disordered stretches follow at residues 25–56 and 78–119; these read GVWLQQGGHQPVAQEQPDRSRRGAEREDAKGL and PTQP…VQNP. Topologically, residues 26–134 are extracellular; the sequence is VWLQQGGHQP…ERSYGAYAVL (109 aa). Positions 40–54 are enriched in basic and acidic residues; sequence QPDRSRRGAEREDAK. A glycan (N-linked (GlcNAc...) asparagine) is linked at N105. A helical membrane pass occupies residues 135 to 155; that stretch reads LLALLLFAVGIVGSLAVMCIV. Topologically, residues 156–167 are cytoplasmic; that stretch reads WHSYYLKSAWNS. Residues 168–188 traverse the membrane as a helical segment; that stretch reads VLASLALWDFLVLFFCLPVVT. Topologically, residues 189–205 are extracellular; sequence FHEITKQRLLGAVSCRA. A disulfide bridge links C203 with C286. The helical transmembrane segment at 206–226 threads the bilayer; it reads VPFVEVSSLGVTTFSLCALGI. Residues 227–251 lie on the Cytoplasmic side of the membrane; that stretch reads DRFHVATSTLPKARPIEPCPSILAK. A helical transmembrane segment spans residues 252–272; the sequence is LAVIWVGSMTLAAPELLLWQL. The Extracellular portion of the chain corresponds to 273-310; that stretch reads VREPSPAAGTVDTCIMKPSAHLPESLYSLVLTYQNARM. The chain crosses the membrane as a helical span at residues 311–331; that stretch reads WWSFGCYFCLPVLFTVTCQLV. The Cytoplasmic portion of the chain corresponds to 332–361; sequence TWRVRGTPGRKPESRPGPQEPRGARPSSTV. Residues 338–358 are disordered; it reads TPGRKPESRPGPQEPRGARPS. A helical membrane pass occupies residues 362 to 382; that stretch reads AGLAAVHALCALPENVCNVVA. The Extracellular segment spans residues 383–398; sequence AYLSAALTRQTLELLG. Residues 399–419 form a helical membrane-spanning segment; sequence LVTQFSTFFKAALTPLLLLCV. Topologically, residues 420 to 482 are cytoplasmic; the sequence is SRPLGRAFLD…PPLLALGTPC (63 aa). T480 is subject to Phosphothreonine.

It belongs to the G-protein coupled receptor 1 family. In terms of assembly, interacts with the PTCH1 receptor. Post-translationally, undergoes metalloprotease-mediated cleavage which reduces its constitutive activity. Ubiquitinated.

The protein resides in the cell membrane. Its subcellular location is the cell projection. The protein localises to the cilium membrane. G-protein coupled receptor. Has been shown to bind the neuroprotective and glioprotective factor prosaposin (PSAP), leading to endocytosis followed by an ERK phosphorylation cascade. However, other studies have shown that prosaposin does not increase activity. It has been suggested that GPR37L1 is a constitutively active receptor which signals through the guanine nucleotide-binding protein G(s) subunit alpha. Participates in the regulation of postnatal cerebellar development by modulating the Shh pathway. Regulates baseline blood pressure in females and protects against cardiovascular stress in males. Mediates inhibition of astrocyte glutamate transporters and reduction in neuronal N-methyl-D-aspartate receptor activity. This is G-protein coupled receptor 37-like 1 (GPR37L1) from Bos taurus (Bovine).